Consider the following 321-residue polypeptide: tRNA U34 carboxymethyltransferase (321 aa).

Carboxy-S-adenosyl-L-methionine is bound by residues Lys90, Trp104, Lys109, Gly129, 151 to 153 (DPT), 180 to 181 (IE), Met195, Tyr199, and Arg314.

Belongs to the class I-like SAM-binding methyltransferase superfamily. CmoB family. As to quaternary structure, homotetramer.

The enzyme catalyses carboxy-S-adenosyl-L-methionine + 5-hydroxyuridine(34) in tRNA = 5-carboxymethoxyuridine(34) in tRNA + S-adenosyl-L-homocysteine + H(+). Catalyzes carboxymethyl transfer from carboxy-S-adenosyl-L-methionine (Cx-SAM) to 5-hydroxyuridine (ho5U) to form 5-carboxymethoxyuridine (cmo5U) at position 34 in tRNAs. The polypeptide is tRNA U34 carboxymethyltransferase (Histophilus somni (strain 129Pt) (Haemophilus somnus)).